The sequence spans 1066 residues: FHIP family protein GH13096 (1066 aa).

Residues 1 to 15 (MSWLRTSPLRQSLTR) show a composition bias toward polar residues. Residues 1-33 (MSWLRTSPLRQSLTRNSGGNGSGGSGNSGNASA) are disordered. Positions 18–27 (GGNGSGGSGN) are enriched in gly residues. A Phosphoserine modification is found at S512. Disordered stretches follow at residues 647-688 (SFKW…NSSG), 827-885 (DNSP…RSDN), and 942-1010 (SRGV…FNSE). Over residues 658 to 687 (NDATTTTATSDPDVEHNNSSNHNNSSINSS) the composition is skewed to low complexity. A Phosphoserine modification is found at S829. Positions 836-856 (HQQQQLQHTTNSTHQQQQAQQ) are enriched in low complexity. Residues 950 to 963 (PRGNTCETSLSTTP) are compositionally biased toward polar residues. Over residues 967-996 (AQATSASSTNSSIGGSTQTLSATHSSSTLH) the composition is skewed to low complexity. Residues 1001–1010 (GPQTASFNSE) are compositionally biased toward polar residues.

The protein belongs to the FHIP family.

The protein is FHIP family protein GH13096 of Drosophila grimshawi (Hawaiian fruit fly).